Reading from the N-terminus, the 306-residue chain is Agmatinase (306 aa).

Mn(2+)-binding residues include His-126, Asp-149, His-151, Asp-153, Asp-230, and Asp-232.

It belongs to the arginase family. Agmatinase subfamily. Mn(2+) is required as a cofactor.

The enzyme catalyses agmatine + H2O = urea + putrescine. The protein operates within amine and polyamine biosynthesis; putrescine biosynthesis via agmatine pathway; putrescine from agmatine: step 1/1. Catalyzes the formation of putrescine from agmatine. The protein is Agmatinase of Enterobacter sp. (strain 638).